The sequence spans 367 residues: 2-aminoethylphosphonate--pyruvate transaminase (367 aa).

Lys-194 bears the N6-(pyridoxal phosphate)lysine mark.

Belongs to the class-V pyridoxal-phosphate-dependent aminotransferase family. PhnW subfamily. Homodimer. Pyridoxal 5'-phosphate is required as a cofactor.

The catalysed reaction is (2-aminoethyl)phosphonate + pyruvate = phosphonoacetaldehyde + L-alanine. Functionally, involved in phosphonate degradation. The sequence is that of 2-aminoethylphosphonate--pyruvate transaminase from Salmonella choleraesuis (strain SC-B67).